The chain runs to 96 residues: MNIRPLHDRVIVKRLEVESTSAGGIVLTGSAAEKSTRGEVLAVGNGRILENGTVRPLDVKVGDVVIFNEGYGVKKEKIDGQEVLILSEMDLMAVVD.

It belongs to the GroES chaperonin family. In terms of assembly, heptamer of 7 subunits arranged in a ring. Interacts with the chaperonin GroEL.

It is found in the cytoplasm. Together with the chaperonin GroEL, plays an essential role in assisting protein folding. The GroEL-GroES system forms a nano-cage that allows encapsulation of the non-native substrate proteins and provides a physical environment optimized to promote and accelerate protein folding. GroES binds to the apical surface of the GroEL ring, thereby capping the opening of the GroEL channel. This chain is Co-chaperonin GroES, found in Shewanella amazonensis (strain ATCC BAA-1098 / SB2B).